A 438-amino-acid chain; its full sequence is MGKPIVAIVGRPNVGKSTLFNKLAGKRISIVEDTPGVTRDRVYAQAEWLNYNFTIIDTGGIEPENNDVIISKMRRQAQVAIETANVIIFIVDGREGLTAADKEVAQMLRKSKKPIVLVVNKIDNMKQENYIYEFYNLGIGEPISISASQGLGLGDMLDKLVENFKNEGNEDEDSEYIKIAFIGKPNVGKSSLINKLLGEERVIVSDIPGTTRDAIDSYLETDEGKFLLIDTAGVRRKSKVKEEIEKYSVIRTYTAVERADVCILMLDATHDISEQDEKIIGYAHELNKAIMVVINKWDLVDKDTKTVNKYKTSIGSSLSFMSYAPYLFISAKTGQRVNRIFKMVRECYDNYCKQIKTGILNDIIGKIVMMKEPPVVGNKRLKIYYVTQIGTKPPTFVFFVNDSKCIHFSYRRYIENQLRDSFDFTGTGIKLEFRERKE.

2 consecutive EngA-type G domains span residues 4 to 168 and 177 to 352; these read PIVA…KNEG and IKIA…DNYC. GTP is bound by residues 10–17, 57–61, 120–123, 183–190, 230–234, and 295–298; these read GRPNVGKS, DTGGI, NKID, GKPNVGKS, DTAGV, and NKWD. The KH-like domain maps to 353 to 437; the sequence is KQIKTGILND…GIKLEFRERK (85 aa).

This sequence belongs to the TRAFAC class TrmE-Era-EngA-EngB-Septin-like GTPase superfamily. EngA (Der) GTPase family. As to quaternary structure, associates with the 50S ribosomal subunit.

GTPase that plays an essential role in the late steps of ribosome biogenesis. This Clostridium kluyveri (strain NBRC 12016) protein is GTPase Der.